A 165-amino-acid chain; its full sequence is Destrin (165 aa).

Position 2 is an N-acetylalanine (Ala2). Residue Ser3 is modified to Phosphoserine. In terms of domain architecture, ADF-H spans 4 to 153 (GVQVADEVCR…NRTCIAEKLG (150 aa)). Lys19 carries the N6-acetyllysine modification. Residues 30-34 (KKRKK) carry the Nuclear localization signal motif.

The protein belongs to the actin-binding proteins ADF family. ISGylated. As to expression, widely expressed. Not found in skeletal muscle.

Its function is as follows. Actin-depolymerizing protein. Severs actin filaments (F-actin) and binds to actin monomers (G-actin). Acts in a pH-independent manner. In Mus musculus (Mouse), this protein is Destrin (Dstn).